The following is a 90-amino-acid chain: Acylphosphatase (90 aa).

The 88-residue stretch at 3-90 (KKQFIVYGLV…REFTDFSVRY (88 aa)) folds into the Acylphosphatase-like domain. Residues Arg18 and Asn36 contribute to the active site.

Belongs to the acylphosphatase family.

It carries out the reaction an acyl phosphate + H2O = a carboxylate + phosphate + H(+). This chain is Acylphosphatase (acyP), found in Pasteurella multocida (strain Pm70).